The sequence spans 1401 residues: DNA-directed RNA polymerase subunit beta' (1401 aa).

The Zn(2+) site is built by Cys-70, Cys-72, Cys-85, and Cys-88. Mg(2+) contacts are provided by Asp-460, Asp-462, and Asp-464. Residues Cys-808, Cys-882, Cys-889, and Cys-892 each coordinate Zn(2+).

It belongs to the RNA polymerase beta' chain family. As to quaternary structure, the RNAP catalytic core consists of 2 alpha, 1 beta, 1 beta' and 1 omega subunit. When a sigma factor is associated with the core the holoenzyme is formed, which can initiate transcription. It depends on Mg(2+) as a cofactor. Zn(2+) is required as a cofactor.

It carries out the reaction RNA(n) + a ribonucleoside 5'-triphosphate = RNA(n+1) + diphosphate. In terms of biological role, DNA-dependent RNA polymerase catalyzes the transcription of DNA into RNA using the four ribonucleoside triphosphates as substrates. This chain is DNA-directed RNA polymerase subunit beta', found in Legionella pneumophila (strain Corby).